The primary structure comprises 538 residues: MEIKEISVPQQGVVADYMNGKKEIQSCFDYMLTEDAFKQRVQDLREREFFRQDLVTHLLEYNTKLQAGEATIQNVKALGDENTYVVIAGQQAGLLTGPLYTIHKIISVLQLAKEKEESLGVKVVPVFWIAGEDHDMDEINHTFVTKNKKIKKTIFHDRNPKKASASESELSLEDCRKWIEEIFKTYPETNFTKDVLQFVDDSLRKSNTYVDFFGHLIMKMFVNSGLILVDSHHPELRKLEVPFFKQIVSKYKEVQEGLLNQQEVIKELGYKPIIETKSNAVHIFMEIDNERVLLEDNQGEFVGKDGTYSFSYEELIEEMERSPERFSNNVVTRPLMQEYVFPTLAFIGGPGELAYWSELQQVFHTIGFRMPPVVPRITITYLERDIATDLHDLQLQESDPFLNNVDKLRENWLSNQIEEPIDERFVEAKKEIMNIHTSLQQFVKEIDPGLSAFAGKNEFKINEQIELLERMLKRNVEKKHEVELNKFRRIQFALRPLGAPQERVWNVCYYLNQFGLDFVDHVMEKTFSWNGKHHVIKL.

Residues 460–484 (KINEQIELLERMLKRNVEKKHEVEL) adopt a coiled-coil conformation.

The protein belongs to the BshC family.

Functionally, involved in bacillithiol (BSH) biosynthesis. May catalyze the last step of the pathway, the addition of cysteine to glucosamine malate (GlcN-Mal) to generate BSH. The chain is Putative cysteine ligase BshC from Bacillus cereus (strain ZK / E33L).